We begin with the raw amino-acid sequence, 88 residues long: Small ribosomal subunit protein bS20 (88 aa).

Belongs to the bacterial ribosomal protein bS20 family.

Functionally, binds directly to 16S ribosomal RNA. The chain is Small ribosomal subunit protein bS20 from Maricaulis maris (strain MCS10) (Caulobacter maris).